Here is a 124-residue protein sequence, read N- to C-terminus: Large ribosomal subunit protein bL12 (124 aa).

Belongs to the bacterial ribosomal protein bL12 family. Homodimer. Part of the ribosomal stalk of the 50S ribosomal subunit. Forms a multimeric L10(L12)X complex, where L10 forms an elongated spine to which 2 to 4 L12 dimers bind in a sequential fashion. Binds GTP-bound translation factors.

Functionally, forms part of the ribosomal stalk which helps the ribosome interact with GTP-bound translation factors. Is thus essential for accurate translation. This Liberibacter africanus subsp. capensis protein is Large ribosomal subunit protein bL12.